A 793-amino-acid chain; its full sequence is Phenylalanine--tRNA ligase beta subunit (793 aa).

In terms of domain architecture, tRNA-binding spans 39 to 148; the sequence is AKPFTGVVVG…EDAPVGLNIR (110 aa). A B5 domain is found at 400-476; the sequence is PKREAIELNQ…RIHGYDNIQI (77 aa). Mg(2+)-binding residues include Asp-454, Asp-460, Glu-463, and Glu-464. Residues 698–791 form the FDX-ACB domain; that stretch reads SRFPSVRRDI…LENTYQATLR (94 aa).

This sequence belongs to the phenylalanyl-tRNA synthetase beta subunit family. Type 1 subfamily. In terms of assembly, tetramer of two alpha and two beta subunits. Requires Mg(2+) as cofactor.

It localises to the cytoplasm. It carries out the reaction tRNA(Phe) + L-phenylalanine + ATP = L-phenylalanyl-tRNA(Phe) + AMP + diphosphate + H(+). This Acinetobacter baylyi (strain ATCC 33305 / BD413 / ADP1) protein is Phenylalanine--tRNA ligase beta subunit.